The chain runs to 450 residues: Homogentisate 1,2-dioxygenase (450 aa).

The Proton acceptor role is filled by His-304. His-347 and Glu-353 together coordinate Fe cation. Homogentisate contacts are provided by Tyr-362 and His-383. His-383 contacts Fe cation.

The protein belongs to the homogentisate dioxygenase family. As to quaternary structure, hexamer; dimer of trimers. Fe cation is required as a cofactor.

The enzyme catalyses homogentisate + O2 = 4-maleylacetoacetate + H(+). Its pathway is amino-acid degradation; L-phenylalanine degradation; acetoacetate and fumarate from L-phenylalanine: step 4/6. Involved in the catabolism of homogentisate (2,5-dihydroxyphenylacetate or 2,5-OH-PhAc), a central intermediate in the degradation of phenylalanine and tyrosine. Catalyzes the oxidative ring cleavage of the aromatic ring of homogentisate to yield maleylacetoacetate. The chain is Homogentisate 1,2-dioxygenase from Burkholderia thailandensis (strain ATCC 700388 / DSM 13276 / CCUG 48851 / CIP 106301 / E264).